We begin with the raw amino-acid sequence, 513 residues long: Calcium-binding mitochondrial carrier protein SCaMC-2 (513 aa).

Topologically, residues 1–233 are mitochondrial intermembrane; that stretch reads MARPRSLVSP…EKQTGMWWRH (233 aa). EF-hand domains lie at 55 to 90, 91 to 124, 122 to 157, and 158 to 193; these read EHET…LGVH, RTEL…RDHE, DHEK…LGVN, and ISEQ…HPAE. Positions 68, 70, 72, 79, 104, 106, 108, 110, and 115 each coordinate Ca(2+). Solcar repeat units follow at residues 228–314, 322–407, and 419–507; these read GMWW…MKRI, LGIH…LKNA, and PGVF…LKLT. The chain crosses the membrane as a helical span at residues 234–251; the sequence is LVAGGGAGAVSRTCTAPL. Topologically, residues 252-288 are mitochondrial matrix; that stretch reads DRLKVLMQVHASRSNNMSMLGGFTQMIREGGIRSLWR. A helical transmembrane segment spans residues 289 to 308; sequence GNGINVIKIAPESAIKFMAY. Residues 309-331 lie on the Mitochondrial intermembrane side of the membrane; it reads EQMKRIIGSDQETLGIHERLVAG. Residues 332 to 345 traverse the membrane as a helical segment; sequence SLAGVIAQSSIYPM. Topologically, residues 346-381 are mitochondrial matrix; it reads EVLKTRMALRKTGQYQGMLDCGKKILLKEGVSAFYK. The chain crosses the membrane as a helical span at residues 382 to 401; the sequence is GYVPNMLGIIPYAGIDLAVY. Topologically, residues 402-424 are mitochondrial intermembrane; the sequence is ETLKNAWLQRYATSSADPGVFVL. The helical transmembrane segment at 425–442 threads the bilayer; it reads LACGTISSTCGQLASYPL. Residues 443 to 481 are Mitochondrial matrix-facing; the sequence is ALVRTRMQAEASVEGAPQMTMSKLFKHIVKTEGAFGLYR. The helical transmembrane segment at 482–501 threads the bilayer; sequence GLAPNFMKVIPAVSISYVVY. Over 502–513 the chain is Mitochondrial intermembrane; the sequence is ENLKLTLGVQSR.

It belongs to the mitochondrial carrier (TC 2.A.29) family.

The protein localises to the mitochondrion inner membrane. In terms of biological role, calcium-dependent mitochondrial solute carrier. The chain is Calcium-binding mitochondrial carrier protein SCaMC-2 (slc25a25) from Xenopus tropicalis (Western clawed frog).